The chain runs to 293 residues: Ribosomal protein L11 methyltransferase (293 aa).

S-adenosyl-L-methionine is bound by residues T145, G166, D188, and N230.

The protein belongs to the methyltransferase superfamily. PrmA family.

The protein resides in the cytoplasm. The catalysed reaction is L-lysyl-[protein] + 3 S-adenosyl-L-methionine = N(6),N(6),N(6)-trimethyl-L-lysyl-[protein] + 3 S-adenosyl-L-homocysteine + 3 H(+). Its function is as follows. Methylates ribosomal protein L11. The chain is Ribosomal protein L11 methyltransferase from Mannheimia succiniciproducens (strain KCTC 0769BP / MBEL55E).